The following is a 132-amino-acid chain: L-ectoine synthase (132 aa).

Belongs to the ectoine synthase family.

The catalysed reaction is (2S)-4-acetamido-2-aminobutanoate = L-ectoine + H2O. The protein operates within amine and polyamine biosynthesis; ectoine biosynthesis; L-ectoine from L-aspartate 4-semialdehyde: step 3/3. Its function is as follows. Catalyzes the circularization of gamma-N-acetyl-alpha,gamma-diaminobutyric acid (ADABA) to ectoine (1,4,5,6-tetrahydro-2-methyl-4-pyrimidine carboxylic acid), which is an excellent osmoprotectant. The chain is L-ectoine synthase from Rhodococcus jostii (strain RHA1).